The sequence spans 342 residues: uncharacterized protein (342 aa).

Belongs to the cycloisomerase 2 family.

This is an uncharacterized protein from Staphylococcus aureus (strain NCTC 8325 / PS 47).